The sequence spans 298 residues: Iron/alpha-ketoglutarate-dependent dioxygenase ausO (298 aa).

Positions 130, 132, and 211 each coordinate Fe cation.

The protein belongs to the PhyH family. Homodimer. It depends on Fe cation as a cofactor.

The protein operates within secondary metabolite biosynthesis; terpenoid biosynthesis. In terms of biological role, iron/alpha-ketoglutarate-dependent dioxygenase; part of the gene cluster that mediates the biosynthesis of calidodehydroaustin, a fungal meroterpenoid. The first step of the pathway is the synthesis of 3,5-dimethylorsellinic acid by the polyketide synthase ausA. 3,5-dimethylorsellinic acid is then prenylated by the polyprenyl transferase ausN. Further epoxidation by the FAD-dependent monooxygenase ausM and cyclization by the probable terpene cyclase ausL lead to the formation of protoaustinoid A. Protoaustinoid A is then oxidized to spiro-lactone preaustinoid A3 by the combined action of the FAD-binding monooxygenases ausB and ausC, and the dioxygenase ausE. Acid-catalyzed keto-rearrangement and ring contraction of the tetraketide portion of preaustinoid A3 by ausJ lead to the formation of preaustinoid A4. The aldo-keto reductase ausK, with the help of ausH, is involved in the next step by transforming preaustinoid A4 into isoaustinone which is in turn hydroxylated by the P450 monooxygenase ausI to form austinolide. The cytochrome P450 monooxygenase ausG modifies austinolide to austinol. Austinol is further acetylated to austin by the O-acetyltransferase ausP, which spontaneously changes to dehydroaustin. The cytochrome P450 monooxygenase ausR then converts dehydroaustin is into 7-dehydrodehydroaustin. The hydroxylation catalyzed by ausR permits the O-acetyltransferase ausQ to add an additional acetyl group to the molecule, leading to the formation of acetoxydehydroaustin. The short chain dehydrogenase ausT catalyzes the reduction of the double bond present between carbon atoms 1 and 2 to convert 7-dehydrodehydroaustin into 1,2-dihydro-7-hydroxydehydroaustin. AusQ catalyzes not only an acetylation reaction but also the addition of the PKS ausV diketide product to 1,2-dihydro-7-hydroxydehydroaustin, forming precalidodehydroaustin. Finally, the iron/alpha-ketoglutarate-dependent dioxygenase converts precalidodehydroaustin into calidodehydroaustin. This chain is Iron/alpha-ketoglutarate-dependent dioxygenase ausO, found in Aspergillus calidoustus.